A 536-amino-acid polypeptide reads, in one-letter code: CTP synthase (536 aa).

The interval 1–268 (MKSKFIFITG…GKVLCKLFNI (268 aa)) is amidoligase domain. Position 14 (Ser14) interacts with CTP. Residue Ser14 participates in UTP binding. 15–20 (SLGKGL) contacts ATP. Position 55 (Tyr55) interacts with L-glutamine. Residue Asp72 coordinates ATP. The Mg(2+) site is built by Asp72 and Glu142. CTP is bound by residues 149–151 (DIE), 189–194 (KTKPMQ), and Lys225. Residues 189-194 (KTKPMQ) and Lys225 each bind UTP. One can recognise a Glutamine amidotransferase type-1 domain in the interval 293-535 (TIALVGKYVE…IKAAVDNKIN (243 aa)). L-glutamine is bound at residue Gly356. The Nucleophile; for glutamine hydrolysis role is filled by Cys383. L-glutamine-binding positions include 384–387 (LGMQ), Glu407, and Arg463. Residues His508 and Glu510 contribute to the active site.

It belongs to the CTP synthase family. Homotetramer.

It carries out the reaction UTP + L-glutamine + ATP + H2O = CTP + L-glutamate + ADP + phosphate + 2 H(+). The enzyme catalyses L-glutamine + H2O = L-glutamate + NH4(+). The catalysed reaction is UTP + NH4(+) + ATP = CTP + ADP + phosphate + 2 H(+). It functions in the pathway pyrimidine metabolism; CTP biosynthesis via de novo pathway; CTP from UDP: step 2/2. Its activity is regulated as follows. Allosterically activated by GTP, when glutamine is the substrate; GTP has no effect on the reaction when ammonia is the substrate. The allosteric effector GTP functions by stabilizing the protein conformation that binds the tetrahedral intermediate(s) formed during glutamine hydrolysis. Inhibited by the product CTP, via allosteric rather than competitive inhibition. Catalyzes the ATP-dependent amination of UTP to CTP with either L-glutamine or ammonia as the source of nitrogen. Regulates intracellular CTP levels through interactions with the four ribonucleotide triphosphates. This chain is CTP synthase, found in Treponema denticola (strain ATCC 35405 / DSM 14222 / CIP 103919 / JCM 8153 / KCTC 15104).